Consider the following 159-residue polypeptide: uncharacterized protein (159 aa).

Transmembrane regions (helical) follow at residues 76-96 (AIKYLIEGLAVAFVAYYFIGK), 104-124 (IVMLGITAACVFAILDVFSPT), and 131-151 (FGAGFGIGTSLFGLNPAVIGG).

The protein resides in the membrane. This is an uncharacterized protein from Acanthamoeba polyphaga (Amoeba).